A 293-amino-acid chain; its full sequence is Protease HtpX homolog (293 aa).

2 helical membrane passes run 4 to 24 (IFLF…TMRI) and 38 to 58 (LTGL…ISLL). Residue H146 participates in Zn(2+) binding. The active site involves E147. Residue H150 coordinates Zn(2+). The next 2 helical transmembrane spans lie at 161-181 (LIQG…GYFV) and 198-218 (ATVI…VAWF). E223 serves as a coordination point for Zn(2+).

Belongs to the peptidase M48B family. The cofactor is Zn(2+).

It localises to the cell inner membrane. This Bordetella parapertussis (strain 12822 / ATCC BAA-587 / NCTC 13253) protein is Protease HtpX homolog.